The sequence spans 762 residues: Putative cation exchanger YDL206W (762 aa).

Positions 1–26 (MHKPLRWLITIAFYVSNVILIGYSLS) are cleaved as a signal peptide. The Extracellular segment spans residues 27 to 30 (SNGS). N-linked (GlcNAc...) asparagine glycosylation is present at N28. A helical membrane pass occupies residues 31–51 (ISEFYLHSVVLIECFSLLGVV). Over 52 to 102 (TSDCLTPSLSYISSNIFHISDRVSGMTLLALGNALPDITSTYQSMKSGVTS) the chain is Cytoplasmic. Residues 103 to 123 (LAIGELFGGIFFLLTVVIGLM) traverse the membrane as a helical segment. Residues 124–156 (GCVATIQFQHDKSIETYTEESFDQNLSYDRSNY) are Extracellular-facing. N148 is a glycosylation site (N-linked (GlcNAc...) asparagine). The chain crosses the membrane as a helical span at residues 157 to 177 (ILDVGIFTFMLLVSGTFLADG). A topological domain (cytoplasmic) is located at residue R178. A helical transmembrane segment spans residues 179–199 (LYFWECIVMVLTYCCCAVYLI). The Extracellular segment spans residues 200–501 (KSYKYPCEIN…YNYLTDVSLE (302 aa)). 2 N-linked (GlcNAc...) asparagine glycosylation sites follow: N280 and N329. Residues 502-522 (IGFFEFLSLLVTTPVSIILYL) traverse the membrane as a helical segment. Residues 523–554 (SIPSEISQTDHDLPLSYLQNIQLIASPIILNQ) lie on the Cytoplasmic side of the membrane. Residues 555–575 (LITNNFSFWLLILSLVIAILL) form a helical membrane-spanning segment. At 576-589 (YFKTRTIPNKFNSD) the chain is on the extracellular side. Residues 590 to 610 (IIFTVAFLLSLACLSKAVHII) traverse the membrane as a helical segment. The Cytoplasmic segment spans residues 611–615 (VVTLT). The helical transmembrane segment at 616-636 (HWINVFNISETILGLTIFTWG) threads the bilayer. Topologically, residues 637–650 (NSIGDLVSNITFVK) are extracellular. N-linked (GlcNAc...) asparagine glycosylation is present at N645. A helical membrane pass occupies residues 651–671 (IGVLEIAIGACFGSPLLYFLF). Topologically, residues 672 to 709 (GVGFDGIMIMLGDKTGKIVSGRDSNILMHHIDFKVDKN) are cytoplasmic. Residues 710 to 730 (LINTGVGILIAFLIFTVLIPL) traverse the membrane as a helical segment. Over 731–738 (NDWKIDKK) the chain is Extracellular. A helical transmembrane segment spans residues 739 to 759 (ISIALLTLYIVVTCISVFLEV). The Cytoplasmic segment spans residues 760–762 (HQV).

The protein belongs to the Ca(2+):cation antiporter (CaCA) (TC 2.A.19) family.

The protein resides in the membrane. In terms of biological role, putative cation exchanger. This chain is Putative cation exchanger YDL206W, found in Saccharomyces cerevisiae (strain ATCC 204508 / S288c) (Baker's yeast).